The chain runs to 1078 residues: Protein U90 (1078 aa).

The span at 1-12 (MESAKDTTSTSM) shows a compositional bias: polar residues. 4 disordered regions span residues 1 to 28 (MESA…SNEE), 464 to 483 (SPTD…PTRQ), 703 to 732 (HMNN…DHKT), and 781 to 818 (ESED…DCTS).

In Homo sapiens (Human), this protein is Protein U90 (U90).